The following is a 192-amino-acid chain: Epididymal-specific lipocalin-12 (192 aa).

Residues 1-19 (MRLLCGLWLWLSLLKVLQA) form the signal peptide. Cysteines 88 and 192 form a disulfide.

It belongs to the calycin superfamily. Lipocalin family. Monomer.

It localises to the secreted. Functionally, binds all-trans retinoic acid and may act as a retinoid carrier protein within the epididymis. May play a role in male fertility. In Homo sapiens (Human), this protein is Epididymal-specific lipocalin-12 (LCN12).